The sequence spans 103 residues: Translation initiation factor 1A (103 aa).

Residues 11–86 (TRVRTPRENE…EKCDVIWRYT (76 aa)) form the S1-like domain.

The protein belongs to the eIF-1A family.

In terms of biological role, seems to be required for maximal rate of protein biosynthesis. Enhances ribosome dissociation into subunits and stabilizes the binding of the initiator Met-tRNA(I) to 40 S ribosomal subunits. This chain is Translation initiation factor 1A (eIF1A), found in Methanococcus maripaludis (strain C5 / ATCC BAA-1333).